A 480-amino-acid polypeptide reads, in one-letter code: RNA-binding protein 42 (480 aa).

The interval 1-30 is disordered; the sequence is MAGAGPAPGLPGAGGPVVPGPGAGIPGKSG. Ala2 is modified (N-acetylalanine). Gly residues predominate over residues 11-27; that stretch reads PGAGGPVVPGPGAGIPG. A Phosphoserine modification is found at Ser135. Asymmetric dimethylarginine occurs at positions 153, 158, 168, and 181. Positions 236–480 are necessary for interaction with HNRNPK; the sequence is ELGLGLGLGL…QKEKKKLGLR (245 aa). Residues 319–356 form a disordered region; sequence SLRPRPRPPRPEPPPGLMALEVPEPLGEDKKKGKPEKL. The span at 345–356 shows a compositional bias: basic and acidic residues; the sequence is GEDKKKGKPEKL. The 79-residue stretch at 381-459 folds into the RRM domain; it reads FRIFCGDLGN…RPIKLRKSMW (79 aa).

This sequence belongs to the RRM RBM42 family. Interacts with HNRNPK.

It localises to the nucleus. Its subcellular location is the cytoplasm. Functionally, binds (via the RRM domain) to the 3'-untranslated region (UTR) of CDKN1A mRNA. The chain is RNA-binding protein 42 (RBM42) from Homo sapiens (Human).